The primary structure comprises 327 residues: Protein UL95 homolog (327 aa).

This sequence belongs to the herpesviridae UL95 family. In terms of assembly, interacts with ORF24; this interaction may serve as a core scaffold for the assembly of the viral transcription initiation complex. Interacts with ORF66. Interacts with ORF18. Interacts with ORF23. Interacts with ORF31. Interacts with host EPAS1; this interaction stabilizes host EPAS1, ensuring its transcriptional activity.

The protein localises to the host nucleus. In terms of biological role, participates in the expression of late viral mRNAs in part by interacting with ORF24. Expressed before viral DNA replication, assembles at the viral pre-replication complexes (pre-RCs) and thus serves as a hub for recruiting a viral transcription complex to ORF24 to promote late viral gene expression. Also plays a regulatory role in the viral life cycle by regulating host transcriptional regulators HIF1A and EPAS1. This Homo sapiens (Human) protein is Protein UL95 homolog (ORF34).